We begin with the raw amino-acid sequence, 279 residues long: Osmoprotective compounds uptake permease protein GgtC (279 aa).

The next 7 helical transmembrane spans lie at 7–27, 58–78, 90–110, 120–140, 146–166, 202–222, and 247–267; these read LLFLSAYLILPTLETVYLSFF, LWLVLVTGISVSLGLIIAVLV, IIFLPMAISFVGASVIWKFVY, IGLLNAIVTSLGFAPVGWLVE, FALIAIMIWLYTGFCMVILSA, LLVVSTTMVILVLKVFDIVFV, and FGRGSTIAVILLLLIVPVMIT. The region spanning 53-270 is the ABC transmembrane type-1 domain; the sequence is FRNNLLWLVL…IVPVMITNIR (218 aa).

This sequence belongs to the binding-protein-dependent transport system permease family. As to quaternary structure, the complex is composed of two ATP-binding proteins (GgtA), two transmembrane proteins (GgtC and GgtD) and a solute-binding protein (GgtB).

It localises to the cell membrane. Its function is as follows. Part of the ABC transporter complex GgtABCD involved in the uptake of the osmoprotective compounds glucosylglycerol (GG), sucrose and trehalose. Responsible for the translocation of the substrate across the membrane. In Synechocystis sp. (strain ATCC 27184 / PCC 6803 / Kazusa), this protein is Osmoprotective compounds uptake permease protein GgtC.